The sequence spans 60 residues: Large ribosomal subunit protein bL32 (60 aa).

Residues Met1–Leu22 form a disordered region. The span at His7–Tyr20 shows a compositional bias: basic residues.

This sequence belongs to the bacterial ribosomal protein bL32 family.

The polypeptide is Large ribosomal subunit protein bL32 (Streptococcus pyogenes serotype M3 (strain ATCC BAA-595 / MGAS315)).